A 580-amino-acid chain; its full sequence is Formate--tetrahydrofolate ligase (580 aa).

Residue 65-72 participates in ATP binding; that stretch reads TPHGEGKT.

This sequence belongs to the formate--tetrahydrofolate ligase family.

It catalyses the reaction (6S)-5,6,7,8-tetrahydrofolate + formate + ATP = (6R)-10-formyltetrahydrofolate + ADP + phosphate. The protein operates within one-carbon metabolism; tetrahydrofolate interconversion. This Shewanella baltica (strain OS223) protein is Formate--tetrahydrofolate ligase.